The primary structure comprises 92 residues: UPF0250 protein VP0718 (92 aa).

The protein belongs to the UPF0250 family.

This Vibrio parahaemolyticus serotype O3:K6 (strain RIMD 2210633) protein is UPF0250 protein VP0718.